A 545-amino-acid chain; its full sequence is Degenerin-like protein asic-2 (545 aa).

Residues 1–34 are Cytoplasmic-facing; that stretch reads MRGGGFVQIFKDFSNWSTVAVVPHVANANNKISR. The chain crosses the membrane as a helical span at residues 35 to 55; sequence IFWIAIFLFVLGMFAYELYIL. At 56-457 the chain is on the extracellular side; the sequence is IAKFFSYPAT…NVINDLGGQA (402 aa). The cysteines at positions 83 and 191 are disulfide-linked. Asparagine 201 carries an N-linked (GlcNAc...) asparagine glycan. Cystine bridges form between cysteine 284-cysteine 370, cysteine 305-cysteine 366, cysteine 309-cysteine 364, cysteine 318-cysteine 343, and cysteine 320-cysteine 334. Asparagine 350 carries N-linked (GlcNAc...) asparagine glycosylation. Residues 458 to 478 form a helical membrane-spanning segment; that stretch reads GLWLGLSVISVVEMTGLMLVM. Residues 462–464 carry the GAS motif; ion selectivity filter motif; it reads GLS. Topologically, residues 479–545 are cytoplasmic; that stretch reads GAFCVTGGAI…NKGDEEKKKK (67 aa). 2 stretches are compositionally biased toward basic and acidic residues: residues 514–523 and 534–545; these read DHLEKKHGEM and IENKGDEEKKKK. A disordered region spans residues 514–545; the sequence is DHLEKKHGEMESGSDGEVDDIENKGDEEKKKK.

This sequence belongs to the amiloride-sensitive sodium channel (TC 1.A.6) family. As to quaternary structure, can form homotrimers. Heterotrimer; forms functional heterotrimers producing channel with different properties.

The protein localises to the cell membrane. The catalysed reaction is Na(+)(in) = Na(+)(out). Inhibited by the diuretic drug amiloride. In terms of biological role, could form pH-gated heterotrimeric sodium channels that act as postsynaptic excitatory sensors in the nervous system, generating rapid, transient inward currents that fully desensitize upon extracellular acidification. This chain is Degenerin-like protein asic-2 (asic-2), found in Caenorhabditis elegans.